A 306-amino-acid chain; its full sequence is Palmitoyl-protein thioesterase 1 (306 aa).

The N-terminal stretch at 1 to 27 is a signal peptide; that stretch reads MASSSCLWLLALAFLLGSCASLALGHL. Intrachain disulfides connect cysteine 45/cysteine 46, cysteine 96/cysteine 128, and cysteine 152/cysteine 160. Serine 115 is a catalytic residue. N-linked (GlcNAc...) asparagine glycosylation is found at asparagine 197, asparagine 212, and asparagine 232. Residues aspartate 233 and histidine 289 contribute to the active site.

This sequence belongs to the palmitoyl-protein thioesterase family. In terms of assembly, interacts with CLN5, ATP5F1A and ATP5F1B. Glycosylated. As to expression, spleen, brain, seminal vesicle, and testis. Lower levels of activity in liver, heart, lung, and skeletal muscle.

The protein localises to the lysosome. Its subcellular location is the secreted. It localises to the golgi apparatus. It is found in the endoplasmic reticulum. The catalysed reaction is S-hexadecanoyl-L-cysteinyl-[protein] + H2O = L-cysteinyl-[protein] + hexadecanoate + H(+). The enzyme catalyses hexadecanoyl-CoA + H2O = hexadecanoate + CoA + H(+). It carries out the reaction S-hexadecanoyl-N-acetylcysteamine + H2O = N-acetylcysteamine + hexadecanoate + H(+). It catalyses the reaction S-hexadecanoyl-N-acetylcysteine methyl ester + H2O = N-acetylcysteine methyl ester + hexadecanoate + H(+). Palmitoylation reduces PPT1 enzymatic activity. Its function is as follows. Has thioesterase activity against fatty acid thioesters with 14 -18 carbons, including palmitoyl-CoA, S-palmitoyl-N-acetylcysteamine, and palmitoylated proteins. In contrast to PPT2, PPT1 can hydrolyze palmitoylated proteins and palmitoylcysteine. The protein is Palmitoyl-protein thioesterase 1 (PPT1) of Bos taurus (Bovine).